The sequence spans 873 residues: K(+)/H(+) antiporter 1 (873 aa).

Over 1-23 (MANTVGGILSGVNPFHYNSSSPL) the chain is Extracellular. A helical membrane pass occupies residues 24 to 44 (TLFLFQACLILLVCNLIHIPF). Residues 45 to 51 (SMMRQPK) lie on the Cytoplasmic side of the membrane. The helical transmembrane segment at 52 to 72 (VISEVISGVILGPTIFGQIPN) threads the bilayer. Topologically, residues 73–82 (YTNTIFPTSS) are extracellular. A helical transmembrane segment spans residues 83–103 (IPGLNLVANLGIILFMFFLGL). Residues 104–116 (EVDIAFIKKHLKK) lie on the Cytoplasmic side of the membrane. Residues 117–137 (ALVIGIVTLAVPFGFGCLLAI) form a helical membrane-spanning segment. Topologically, residues 138-154 (PLFHTYANKTEGERHIK) are extracellular. Residues 155-175 (FSVFMVFIAVSISVTAFPVLC) traverse the membrane as a helical segment. Residues 176 to 188 (RILNELRLIKDRA) are Cytoplasmic-facing. A helical transmembrane segment spans residues 189–209 (GIVVLAAGIINDIMGWILLAL). Over 210–220 (SIILSSAEGSP) the chain is Extracellular. A helical transmembrane segment spans residues 221–241 (VNTVYILLITFAWFLIYFFPL). At 242-267 (KYLLRWVLIRTHELDRSKPSPLATMC) the chain is on the cytoplasmic side. Residues 268 to 288 (ILFIMFISAYFTDIIGVHPIF) form a helical membrane-spanning segment. The Extracellular portion of the chain corresponds to 289-316 (GAFIAGLVVPRDDHYVVKLTERMEDIPN). Residues 317-337 (IVFIPIYFAVAGLNVDLTLLN) traverse the membrane as a helical segment. Residues 338–341 (EGRD) lie on the Cytoplasmic side of the membrane. The chain crosses the membrane as a helical span at residues 342–362 (WGYVFATIGIAIFTKIISGTL). The Extracellular portion of the chain corresponds to 363 to 375 (TAKLTGLFWREAT). Residues 376-396 (AAGVLMSCKGIVEIVVLTVGL) traverse the membrane as a helical segment. The Cytoplasmic portion of the chain corresponds to 397 to 404 (NAGIISRK). A helical membrane pass occupies residues 405–425 (IFGMFVLMALVSTFVTTPLTQ). The Extracellular segment spans residues 426-726 (LVYPDSYRDG…DRFKRKRFNL (301 aa)). Phosphoserine is present on serine 557. Lysine 562 is covalently cross-linked (Glycyl lysine isopeptide (Lys-Gly) (interchain with G-Cter in ubiquitin)). Residues 727–747 (LLPKPYLTQSDYLGLYLLLLI) form a helical membrane-spanning segment. Residues 748 to 873 (CYRDGYNNDN…TLIVHHFSSE (126 aa)) lie on the Cytoplasmic side of the membrane.

This sequence belongs to the monovalent cation:proton antiporter 2 (CPA2) transporter (TC 2.A.37) family.

It localises to the membrane. Potassium-proton antiport. This Saccharomyces cerevisiae (strain ATCC 204508 / S288c) (Baker's yeast) protein is K(+)/H(+) antiporter 1 (KHA1).